We begin with the raw amino-acid sequence, 371 residues long: Cytochrome b (371 aa).

Transmembrane regions (helical) follow at residues 25-45 (FGSM…FLSM), 69-90 (WMMQ…YMHI), 105-125 (WLSG…GYVL), and 170-190 (FFAL…VHIM). His75 and His89 together coordinate heme b. Heme b is bound by residues His174 and His188. Residue His193 participates in a ubiquinone binding. Helical transmembrane passes span 218–238 (YKDL…VSFF), 280–300 (LGGA…PFTH), 312–332 (LMQF…WTAT), and 339–358 (FTTI…MSNP).

It belongs to the cytochrome b family. The cytochrome bc1 complex contains 3 respiratory subunits (MT-CYB, CYC1 and UQCRFS1), 2 core proteins (UQCRC1 and UQCRC2) and probably 6 low-molecular weight proteins. It depends on heme b as a cofactor.

Its subcellular location is the mitochondrion inner membrane. In terms of biological role, component of the ubiquinol-cytochrome c reductase complex (complex III or cytochrome b-c1 complex) that is part of the mitochondrial respiratory chain. The b-c1 complex mediates electron transfer from ubiquinol to cytochrome c. Contributes to the generation of a proton gradient across the mitochondrial membrane that is then used for ATP synthesis. This chain is Cytochrome b (MT-CYB), found in Candoia carinata (Papuan tree boa).